A 418-amino-acid chain; its full sequence is Putative ion-transport protein YfeO (418 aa).

The next 12 membrane-spanning stretches (helical) occupy residues 10 to 30, 54 to 74, 99 to 119, 120 to 140, 149 to 169, 186 to 206, 223 to 243, 258 to 278, 300 to 320, 322 to 342, 343 to 363, and 386 to 406; these read LLLS…LIVV, DSPF…GLVI, ALPG…SLGP, EHPI…RLLP, ILAS…AALI, LFAP…FFHP, ILSG…AVWC, VLML…AGPV, DYFL…ASGF, GGRI…LHEH, VPAV…VLVV, and LLCI…IMMV.

Belongs to the chloride channel (TC 2.A.49) family.

It localises to the cell membrane. This is Putative ion-transport protein YfeO from Escherichia fergusonii (strain ATCC 35469 / DSM 13698 / CCUG 18766 / IAM 14443 / JCM 21226 / LMG 7866 / NBRC 102419 / NCTC 12128 / CDC 0568-73).